A 604-amino-acid polypeptide reads, in one-letter code: Glutamine--fructose-6-phosphate aminotransferase [isomerizing] (604 aa).

Cysteine 2 acts as the Nucleophile; for GATase activity in catalysis. The Glutamine amidotransferase type-2 domain occupies 2-219 (CGIMGAVSER…EGDSACVTTQ (218 aa)). 2 SIS domains span residues 279–427 (LRAS…DNRA) and 454–594 (LASL…VDQP). The active-site For Fru-6P isomerization activity is lysine 599.

In terms of assembly, homodimer.

It is found in the cytoplasm. The enzyme catalyses D-fructose 6-phosphate + L-glutamine = D-glucosamine 6-phosphate + L-glutamate. In terms of biological role, catalyzes the first step in hexosamine metabolism, converting fructose-6P into glucosamine-6P using glutamine as a nitrogen source. The protein is Glutamine--fructose-6-phosphate aminotransferase [isomerizing] of Legionella pneumophila subsp. pneumophila (strain Philadelphia 1 / ATCC 33152 / DSM 7513).